Reading from the N-terminus, the 378-residue chain is Mating-type protein MAT-1 (378 aa).

A DNA-binding region (alpha box) is located at residues 60–117; sequence KARKALNAFVGFRCYYITIPMFKPWPMKKLSNLIGLLWEADPNKSLWSLMAKPWSTIR.

This sequence belongs to the MATALPHA1 family.

The protein localises to the nucleus. In terms of biological role, mating type proteins are sequence specific DNA-binding proteins that act as master switches in fungal differentiation by controlling gene expression in a cell type-specific fashion. Transcriptional activator that induces the transcription of alpha-specific genes. This Cochliobolus sativus (Common root rot and spot blotch fungus) protein is Mating-type protein MAT-1 (MAT1).